The following is a 124-amino-acid chain: Large ribosomal subunit protein uL22 (124 aa).

This sequence belongs to the universal ribosomal protein uL22 family. Part of the 50S ribosomal subunit.

This protein binds specifically to 23S rRNA; its binding is stimulated by other ribosomal proteins, e.g. L4, L17, and L20. It is important during the early stages of 50S assembly. It makes multiple contacts with different domains of the 23S rRNA in the assembled 50S subunit and ribosome. Functionally, the globular domain of the protein is located near the polypeptide exit tunnel on the outside of the subunit, while an extended beta-hairpin is found that lines the wall of the exit tunnel in the center of the 70S ribosome. The protein is Large ribosomal subunit protein uL22 of Buchnera aphidicola subsp. Cinara cedri (strain Cc).